The primary structure comprises 219 residues: ATP synthase protein MI25 (219 aa).

Residues 29 to 49 (ISIYNEEMIVARCFIGFLILS) form a helical membrane-spanning segment.

This sequence belongs to the ATPase protein MI25 family. In terms of assembly, F-type ATPases have 2 components, CF(1) - the catalytic core - and CF(0) - the membrane proton channel. CF(1) has five subunits: alpha(3), beta(3), gamma(1), delta(1), epsilon(1). CF(0) has three main subunits: a, b and c.

The protein resides in the mitochondrion membrane. Functionally, this is one of the chains of the nonenzymatic component (CF(0) subunit) of the mitochondrial ATPase complex. The protein is ATP synthase protein MI25 of Zea mays (Maize).